A 312-amino-acid polypeptide reads, in one-letter code: Malate dehydrogenase (312 aa).

Residues 12–17 (GAGFTG) and Asp36 each bind NAD(+). The substrate site is built by Arg87 and Arg93. Residues Asn100 and 123–125 (LTN) contribute to the NAD(+) site. Asn125 provides a ligand contact to substrate. Ser149 carries the phosphoserine modification. Arg156 contacts substrate. His180 (proton acceptor) is an active-site residue.

The protein belongs to the LDH/MDH superfamily. MDH type 3 family.

The enzyme catalyses (S)-malate + NAD(+) = oxaloacetate + NADH + H(+). Its function is as follows. Catalyzes the reversible oxidation of malate to oxaloacetate. This Geobacillus kaustophilus (strain HTA426) protein is Malate dehydrogenase.